A 123-amino-acid chain; its full sequence is UPF0102 protein SPO0400 (123 aa).

This sequence belongs to the UPF0102 family.

The sequence is that of UPF0102 protein SPO0400 from Ruegeria pomeroyi (strain ATCC 700808 / DSM 15171 / DSS-3) (Silicibacter pomeroyi).